We begin with the raw amino-acid sequence, 277 residues long: Ribosomal protein L11 methyltransferase (277 aa).

4 residues coordinate S-adenosyl-L-methionine: Thr-130, Gly-151, Asp-172, and Asn-213.

The protein belongs to the methyltransferase superfamily. PrmA family.

It localises to the cytoplasm. It catalyses the reaction L-lysyl-[protein] + 3 S-adenosyl-L-methionine = N(6),N(6),N(6)-trimethyl-L-lysyl-[protein] + 3 S-adenosyl-L-homocysteine + 3 H(+). Methylates ribosomal protein L11. The polypeptide is Ribosomal protein L11 methyltransferase (Campylobacter concisus (strain 13826)).